The primary structure comprises 701 residues: Elongation factor G (701 aa).

The tr-type G domain maps to Asn11–Leu287. GTP contacts are provided by residues Ala20 to Thr27, Asp84 to His88, and Asn138 to Asp141.

It belongs to the TRAFAC class translation factor GTPase superfamily. Classic translation factor GTPase family. EF-G/EF-2 subfamily.

The protein localises to the cytoplasm. Functionally, catalyzes the GTP-dependent ribosomal translocation step during translation elongation. During this step, the ribosome changes from the pre-translocational (PRE) to the post-translocational (POST) state as the newly formed A-site-bound peptidyl-tRNA and P-site-bound deacylated tRNA move to the P and E sites, respectively. Catalyzes the coordinated movement of the two tRNA molecules, the mRNA and conformational changes in the ribosome. This Mycobacterium sp. (strain JLS) protein is Elongation factor G.